Consider the following 334-residue polypeptide: Malate dehydrogenase 2 (334 aa).

An NAD(+)-binding site is contributed by 19 to 25 (IGAGKVG). Residues Arg100 and Arg106 each contribute to the substrate site. NAD(+)-binding positions include Asn113 and 136 to 138 (VSN). The substrate site is built by Asn138 and Arg169. His193 (proton acceptor) is an active-site residue.

It belongs to the LDH/MDH superfamily.

It catalyses the reaction (S)-malate + NAD(+) = oxaloacetate + NADH + H(+). In terms of biological role, catalyzes the reversible oxidation of malate to oxaloacetate. The protein is Malate dehydrogenase 2 of Aquifex aeolicus (strain VF5).